Here is a 365-residue protein sequence, read N- to C-terminus: Probable galacturonosyltransferase-like 10 (365 aa).

The Cytoplasmic segment spans residues Met1 to Arg10. Residues Leu11–Phe31 traverse the membrane as a helical; Signal-anchor for type II membrane protein segment. The Lumenal segment spans residues Pro32–Leu365. Asn209 is a glycosylation site (N-linked (GlcNAc...) asparagine).

The protein belongs to the glycosyltransferase 8 family.

Its subcellular location is the golgi apparatus membrane. It participates in glycan metabolism; pectin biosynthesis. Functionally, may be involved in pectin and/or xylans biosynthesis in cell walls. This is Probable galacturonosyltransferase-like 10 (GATL10) from Arabidopsis thaliana (Mouse-ear cress).